The sequence spans 350 residues: Probable poly-beta-1,6-N-acetyl-D-glucosamine export protein (350 aa).

The next 10 helical transmembrane spans lie at 7-29 (ELVY…TQIT), 44-66 (FYIR…LLTT), 79-101 (TRVK…SESL), 116-138 (LLGQ…SYII), 145-167 (LFNS…YYFT), 187-204 (IIFG…MGYN), 211-233 (FLER…FIAL), 243-262 (SFSY…ILGI), 269-291 (MLFN…HPII), and 306-328 (TMVF…GMIL).

This sequence belongs to the acyltransferase 3 family.

The protein localises to the cell membrane. In terms of biological role, presumably involved in the export of the biofilm adhesin polysaccharide poly-beta-1,6-N-acetyl-D-glucosamine (PNAG, also referred to as PIA) across the cell membrane. This chain is Probable poly-beta-1,6-N-acetyl-D-glucosamine export protein (icaC), found in Staphylococcus aureus (strain MRSA252).